The chain runs to 127 residues: uncharacterized protein (127 aa).

Polar residues predominate over residues 1 to 13 (MEAGNRSGTPQHR). A disordered region spans residues 1 to 26 (MEAGNRSGTPQHRQLSEIRQDLSSSP).

This is an uncharacterized protein from Saccharomyces cerevisiae (strain ATCC 204508 / S288c) (Baker's yeast).